A 502-amino-acid polypeptide reads, in one-letter code: ATP synthase subunit alpha (502 aa).

The segment at 119–139 (GPIATTKSRPIESPAPGVMDR) is disordered. 169–176 (GDRQTGKT) contacts ATP.

The protein belongs to the ATPase alpha/beta chains family. F-type ATPases have 2 components, CF(1) - the catalytic core - and CF(0) - the membrane proton channel. CF(1) has five subunits: alpha(3), beta(3), gamma(1), delta(1), epsilon(1). CF(0) has three main subunits: a(1), b(2) and c(9-12). The alpha and beta chains form an alternating ring which encloses part of the gamma chain. CF(1) is attached to CF(0) by a central stalk formed by the gamma and epsilon chains, while a peripheral stalk is formed by the delta and b chains.

The protein localises to the cell membrane. It carries out the reaction ATP + H2O + 4 H(+)(in) = ADP + phosphate + 5 H(+)(out). Its function is as follows. Produces ATP from ADP in the presence of a proton gradient across the membrane. The alpha chain is a regulatory subunit. The protein is ATP synthase subunit alpha of Alkalihalophilus pseudofirmus (strain ATCC BAA-2126 / JCM 17055 / OF4) (Bacillus pseudofirmus).